The sequence spans 141 residues: Large ribosomal subunit protein uL11 (141 aa).

This sequence belongs to the universal ribosomal protein uL11 family. Part of the ribosomal stalk of the 50S ribosomal subunit. Interacts with L10 and the large rRNA to form the base of the stalk. L10 forms an elongated spine to which L12 dimers bind in a sequential fashion forming a multimeric L10(L12)X complex. One or more lysine residues are methylated.

In terms of biological role, forms part of the ribosomal stalk which helps the ribosome interact with GTP-bound translation factors. The protein is Large ribosomal subunit protein uL11 of Synechococcus sp. (strain WH7803).